A 362-amino-acid chain; its full sequence is D-alanine--D-alanine ligase (362 aa).

In terms of domain architecture, ATP-grasp spans 141–346 (KNIFAEAGLN…YPELIEELIR (206 aa)). ATP is bound at residue 174-229 (EEALGYPCFVKPANLGSSVGINKCKDREELEKAFEEAFQFDRKIIVEENIIGREVE). Residues D300, E313, and N315 each contribute to the Mg(2+) site.

This sequence belongs to the D-alanine--D-alanine ligase family. Requires Mg(2+) as cofactor. The cofactor is Mn(2+).

It localises to the cytoplasm. The enzyme catalyses 2 D-alanine + ATP = D-alanyl-D-alanine + ADP + phosphate + H(+). It functions in the pathway cell wall biogenesis; peptidoglycan biosynthesis. Cell wall formation. The chain is D-alanine--D-alanine ligase from Bacillus cytotoxicus (strain DSM 22905 / CIP 110041 / 391-98 / NVH 391-98).